An 813-amino-acid polypeptide reads, in one-letter code: Hyaluronate lyase HylB (813 aa).

The tat-type signal signal peptide spans 1-32 (MFGTPSRRTFLTASALSAMALAASPTVTDAIA). Residues Asn-222, His-272, and Tyr-281 contribute to the active site.

Belongs to the polysaccharide lyase 8 family. Post-translationally, predicted to be exported by the Tat system. The position of the signal peptide cleavage has not been experimentally proven.

It localises to the secreted. It carries out the reaction [hyaluronan](n) = n 3-(4-deoxy-beta-D-gluc-4-enuronosyl)-N-acetyl-D-glucosamine + H2O. In terms of biological role, degrades hyaluronic acid (HA) exclusively into HA disaccharides (HA-2). Produced HA-2s confer anti-inflammatory properties leading to reduced immunopathology in the mouse model of acne. The chain is Hyaluronate lyase HylB from Cutibacterium acnes (strain DSM 16379 / KPA171202) (Propionibacterium acnes).